Reading from the N-terminus, the 49-residue chain is Isoflavone reductase homolog 2 (49 aa).

5-11 (GGTGYIG) provides a ligand contact to NADP(+).

This sequence belongs to the NmrA-type oxidoreductase family. Isoflavone reductase subfamily.

The protein localises to the cytoplasm. The protein is Isoflavone reductase homolog 2 of Pseudotsuga menziesii (Douglas-fir).